The chain runs to 541 residues: Atrial natriuretic peptide receptor 3 (541 aa).

Residues 1 to 26 (MPSLLVLTFSPCVLLGWALLAGGTGG) form the signal peptide. Topologically, residues 27-481 (GGVGGGGGGA…PCKSSGGLEE (455 aa)) are extracellular. N86 is a glycosylation site (N-linked (GlcNAc...) (complex) asparagine). Residues S106, V135, and C136 each contribute to the chloride site. Intrachain disulfides connect C108-C136 and C213-C261. The N-linked (GlcNAc...) (high mannose) asparagine glycan is linked to N293. N394 carries N-linked (GlcNAc...) (complex) asparagine glycosylation. The chain crosses the membrane as a helical span at residues 482–504 (SAVTGIVVGALLGAGLLMAFYFF). At 505–541 (RKKYRITIERRTQQEESNLGKHRELREDSIRSHFSVA) the chain is on the cytoplasmic side.

It belongs to the ANF receptor family. Homodimer; disulfide-linked. Dimers can also be formed through the C-terminal cysteine of isoform 2. Interacts with OSTN.

It localises to the cell membrane. Its function is as follows. Receptor for the natriuretic peptide hormones, binding with similar affinities atrial natriuretic peptide NPPA/ANP, brain natriuretic peptide NPPB/BNP, and C-type natriuretic peptide NPPC/CNP. May function as a clearance receptor for NPPA, NPPB and NPPC, regulating their local concentrations and effects. Acts as a regulator of osteoblast differentiation and bone growth by binding to its ligand osteocrin, thereby preventing binding between NPR3/NPR-C and natriuretic peptides, leading to increase cGMP production. This is Atrial natriuretic peptide receptor 3 (NPR3) from Homo sapiens (Human).